A 564-amino-acid chain; its full sequence is Dihydroxy-acid dehydratase (564 aa).

Mg(2+) is bound at residue Asp-80. Cys-121 serves as a coordination point for [2Fe-2S] cluster. Positions 122 and 123 each coordinate Mg(2+). At Lys-123 the chain carries N6-carboxylysine. Cys-194 is a [2Fe-2S] cluster binding site. Mg(2+) is bound at residue Glu-447. Ser-473 functions as the Proton acceptor in the catalytic mechanism.

This sequence belongs to the IlvD/Edd family. As to quaternary structure, homodimer. It depends on [2Fe-2S] cluster as a cofactor. Mg(2+) serves as cofactor.

The enzyme catalyses (2R)-2,3-dihydroxy-3-methylbutanoate = 3-methyl-2-oxobutanoate + H2O. It catalyses the reaction (2R,3R)-2,3-dihydroxy-3-methylpentanoate = (S)-3-methyl-2-oxopentanoate + H2O. The protein operates within amino-acid biosynthesis; L-isoleucine biosynthesis; L-isoleucine from 2-oxobutanoate: step 3/4. Its pathway is amino-acid biosynthesis; L-valine biosynthesis; L-valine from pyruvate: step 3/4. Its function is as follows. Functions in the biosynthesis of branched-chain amino acids. Catalyzes the dehydration of (2R,3R)-2,3-dihydroxy-3-methylpentanoate (2,3-dihydroxy-3-methylvalerate) into 2-oxo-3-methylpentanoate (2-oxo-3-methylvalerate) and of (2R)-2,3-dihydroxy-3-methylbutanoate (2,3-dihydroxyisovalerate) into 2-oxo-3-methylbutanoate (2-oxoisovalerate), the penultimate precursor to L-isoleucine and L-valine, respectively. This is Dihydroxy-acid dehydratase from Listeria monocytogenes serotype 4b (strain CLIP80459).